Here is a 375-residue protein sequence, read N- to C-terminus: Anhydro-N-acetylmuramic acid kinase (375 aa).

Glycine 14–aspartate 21 contributes to the ATP binding site.

It belongs to the anhydro-N-acetylmuramic acid kinase family.

The enzyme catalyses 1,6-anhydro-N-acetyl-beta-muramate + ATP + H2O = N-acetyl-D-muramate 6-phosphate + ADP + H(+). The protein operates within amino-sugar metabolism; 1,6-anhydro-N-acetylmuramate degradation. It participates in cell wall biogenesis; peptidoglycan recycling. In terms of biological role, catalyzes the specific phosphorylation of 1,6-anhydro-N-acetylmuramic acid (anhMurNAc) with the simultaneous cleavage of the 1,6-anhydro ring, generating MurNAc-6-P. Is required for the utilization of anhMurNAc either imported from the medium or derived from its own cell wall murein, and thus plays a role in cell wall recycling. This is Anhydro-N-acetylmuramic acid kinase from Cupriavidus pinatubonensis (strain JMP 134 / LMG 1197) (Cupriavidus necator (strain JMP 134)).